The primary structure comprises 70 residues: Cold shock-like protein CspH (70 aa).

Positions 7 to 67 (GIVKTFDCKS…GLRGPTAANV (61 aa)) constitute a CSD domain.

The protein resides in the cytoplasm. In Salmonella typhi, this protein is Cold shock-like protein CspH (cspH).